The primary structure comprises 200 residues: ATP synthase subunit s, mitochondrial (200 aa).

A mitochondrion-targeting transit peptide spans 1–25; the sequence is MMLFGKISQQLCGVKKLPWSCDSRY. The interval 1 to 61 is N-terminal domain; sequence MMLFGKISQQ…SEWLLRCGAM (61 aa). Gly59 lines the Mg(2+) pocket. LRR repeat units lie at residues 62-87, 88-116, 117-141, and 142-173; these read VRYHGQERWQKDYNHLPTGPLDKYKI, QAIDATDSCIMSIGFDHMEGLEHVEKIRL, CKCHYIEDDCLLRLSQLENLQKTIL, and EMEIISCGNITDKGIIALLHLRNLKYLLLSDL. Thr93 is a binding site for Mg(2+).

The protein belongs to the ATP synthase subunit s family. In terms of assembly, homotetramer. Associates with ATP synthase.

The protein localises to the mitochondrion. Its subcellular location is the mitochondrion inner membrane. In terms of biological role, involved in regulation of mitochondrial membrane ATP synthase. Necessary for H(+) conduction of ATP synthase. Facilitates energy-driven catalysis of ATP synthesis by blocking a proton leak through an alternative proton exit pathway. The sequence is that of ATP synthase subunit s, mitochondrial (DMAC2L) from Pongo abelii (Sumatran orangutan).